We begin with the raw amino-acid sequence, 154 residues long: Transcription antitermination protein NusB (154 aa).

Belongs to the NusB family.

In terms of biological role, involved in transcription antitermination. Required for transcription of ribosomal RNA (rRNA) genes. Binds specifically to the boxA antiterminator sequence of the ribosomal RNA (rrn) operons. The chain is Transcription antitermination protein NusB from Enterococcus faecalis (strain ATCC 700802 / V583).